A 307-amino-acid polypeptide reads, in one-letter code: UDP-3-O-acyl-N-acetylglucosamine deacetylase (307 aa).

Residues His78, His241, and Asp245 each coordinate Zn(2+). The active-site Proton donor is the His268.

It belongs to the LpxC family. Requires Zn(2+) as cofactor.

It carries out the reaction a UDP-3-O-[(3R)-3-hydroxyacyl]-N-acetyl-alpha-D-glucosamine + H2O = a UDP-3-O-[(3R)-3-hydroxyacyl]-alpha-D-glucosamine + acetate. The protein operates within glycolipid biosynthesis; lipid IV(A) biosynthesis; lipid IV(A) from (3R)-3-hydroxytetradecanoyl-[acyl-carrier-protein] and UDP-N-acetyl-alpha-D-glucosamine: step 2/6. Functionally, catalyzes the hydrolysis of UDP-3-O-myristoyl-N-acetylglucosamine to form UDP-3-O-myristoylglucosamine and acetate, the committed step in lipid A biosynthesis. The chain is UDP-3-O-acyl-N-acetylglucosamine deacetylase from Acidovorax ebreus (strain TPSY) (Diaphorobacter sp. (strain TPSY)).